The chain runs to 464 residues: Soluble pyridine nucleotide transhydrogenase (464 aa).

35–44 (DSRRQVGGNC) serves as a coordination point for FAD.

This sequence belongs to the class-I pyridine nucleotide-disulfide oxidoreductase family. FAD is required as a cofactor.

Its subcellular location is the cytoplasm. The enzyme catalyses NAD(+) + NADPH = NADH + NADP(+). Its function is as follows. Conversion of NADPH, generated by peripheral catabolic pathways, to NADH, which can enter the respiratory chain for energy generation. The chain is Soluble pyridine nucleotide transhydrogenase from Pseudomonas fluorescens (strain ATCC BAA-477 / NRRL B-23932 / Pf-5).